The sequence spans 257 residues: Isoprenyl transferase (257 aa).

The active site involves Asp-33. Asp-33 provides a ligand contact to Mg(2+). Residues 34-37 (GNGR), Trp-38, Arg-46, His-50, and 78-80 (STE) contribute to the substrate site. Asn-81 acts as the Proton acceptor in catalysis. Substrate contacts are provided by residues Trp-82, Arg-84, Arg-204, and 210–212 (RLS). Position 223 (Glu-223) interacts with Mg(2+).

The protein belongs to the UPP synthase family. Homodimer. Requires Mg(2+) as cofactor.

In terms of biological role, catalyzes the condensation of isopentenyl diphosphate (IPP) with allylic pyrophosphates generating different type of terpenoids. This chain is Isoprenyl transferase, found in Clostridium acetobutylicum (strain ATCC 824 / DSM 792 / JCM 1419 / IAM 19013 / LMG 5710 / NBRC 13948 / NRRL B-527 / VKM B-1787 / 2291 / W).